The primary structure comprises 793 residues: Protocadherin beta-7 (793 aa).

The first 26 residues, 1–26, serve as a signal peptide directing secretion; the sequence is MEARVERAVQKRQVLFLCVFLGMSWA. The Extracellular segment spans residues 27–688; it reads GAEPLRYFVA…DQANLLTVYL (662 aa). 5 Cadherin domains span residues 35 to 133, 138 to 242, 247 to 347, 352 to 451, and 456 to 561; these read VAEE…APVF, ISLK…APDF, YKVQ…RPEL, LTSP…APAF, and YTLF…SPFV. The N-linked (GlcNAc...) asparagine glycan is linked to Asn169. Asn418 and Asn436 each carry an N-linked (GlcNAc...) asparagine glycan. A glycan (N-linked (GlcNAc...) asparagine) is linked at Asn567. The region spanning 568-671 is the Cadherin 6 domain; sequence SSAPCTEPLP…LVDGFSQPYL (104 aa). The helical transmembrane segment at 689–709 threads the bilayer; the sequence is VVALASVSSLFLLSVLLFVAV. Over 710–793 the chain is Cytoplasmic; that stretch reads RLCRRSRAAP…NRPFQNNLGF (84 aa).

The protein resides in the cell membrane. Potential calcium-dependent cell-adhesion protein. May be involved in the establishment and maintenance of specific neuronal connections in the brain. The polypeptide is Protocadherin beta-7 (PCDHB7) (Pan troglodytes (Chimpanzee)).